The sequence spans 141 residues: MAKKVVGEIKLQIAATKANPSPPVGPALGQQGVNIMEFCKAFNERTKDMAGFNIPVVITVYADKSFTFITKQPPATDLIKKAAGISKGADNPLKNKVGKLTKAQVLEIVDKKIADMNTKDREQAAKIIMGSARSMGVEIVD.

This sequence belongs to the universal ribosomal protein uL11 family. In terms of assembly, part of the ribosomal stalk of the 50S ribosomal subunit. Interacts with L10 and the large rRNA to form the base of the stalk. L10 forms an elongated spine to which L12 dimers bind in a sequential fashion forming a multimeric L10(L12)X complex. Post-translationally, one or more lysine residues are methylated.

Forms part of the ribosomal stalk which helps the ribosome interact with GTP-bound translation factors. The protein is Large ribosomal subunit protein uL11 of Campylobacter lari (strain RM2100 / D67 / ATCC BAA-1060).